We begin with the raw amino-acid sequence, 77 residues long: Acyl carrier protein (77 aa).

The Carrier domain occupies 2–77 (SDIADRVKKI…DAVKFIQGAV (76 aa)). Ser-37 carries the O-(pantetheine 4'-phosphoryl)serine modification.

This sequence belongs to the acyl carrier protein (ACP) family. 4'-phosphopantetheine is transferred from CoA to a specific serine of apo-ACP by AcpS. This modification is essential for activity because fatty acids are bound in thioester linkage to the sulfhydryl of the prosthetic group.

Its subcellular location is the cytoplasm. It functions in the pathway lipid metabolism; fatty acid biosynthesis. Functionally, carrier of the growing fatty acid chain in fatty acid biosynthesis. This Paracoccus denitrificans (strain Pd 1222) protein is Acyl carrier protein.